Here is a 386-residue protein sequence, read N- to C-terminus: Patatin-14 (386 aa).

Residues 1–23 (MATTKSFLILFFMILATTSSTCA) form the signal peptide. The PNPLA domain maps to 32-229 (LSIDGGGIKG…TVGDPALLSL (198 aa)). The GXGXXG motif lies at 36-41 (GGGIKG). Positions 75–79 (GTSTG) match the GXSXG motif. The Nucleophile role is filled by Ser77. Residue Asn115 is glycosylated (N-linked (GlcNAc...) asparagine). Asp215 serves as the catalytic Proton acceptor. A DGA/G motif is present at residues 215-217 (DGG). The stretch at 321–381 (ENALTGTTTE…LLSDRKKLRA (61 aa)) forms a coiled coil.

The protein belongs to the patatin family. As to expression, tuber.

It localises to the vacuole. Its function is as follows. Probable lipolytic acyl hydrolase (LAH), an activity which is thought to be involved in the response of tubers to pathogens. This chain is Patatin-14, found in Solanum tuberosum (Potato).